The following is a 270-amino-acid chain: MKMTSKKMKDELMKKLSRPEWDFQYDSEKEVLRIEQKDSKKGINVSLPGVVAKWEVNKEKAIEEVAYYVQEALIAMHKEENSTAKILPVIRSTSFPKQAEEGNPFIMTDHTAETRIYYALDSNKTYRLIDERLLQKLGLTEQQVREMALFNARSLGYEFKQDTVAGNTFYFLNTNDGYDATRILNESLLQSMREKISGDMVVAVPHQDVLIIADIVNEIGYDIIAQMTMKFFAEGHVPITSLSFVYEDGDFEPIFILAKNRKKTDGKEKG.

It belongs to the UPF0354 family.

The chain is UPF0354 protein BCA_4815 from Bacillus cereus (strain 03BB102).